The chain runs to 152 residues: Actin-related protein 2/3 complex subunit 5-B (152 aa).

The interval 21-44 is disordered; the sequence is NKFVDDQLQEEPAEPQGPDEAEVD. Over residues 27–43 the composition is skewed to acidic residues; it reads QLQEEPAEPQGPDEAEV.

The protein belongs to the ARPC5 family. Component of the Arp2/3 complex composed of actr2/arp2, actr3/arp3, arpc1 (arpc1a or arpc1b), arpc2, arpc3, arpc4 and arpc5.

Its subcellular location is the cytoplasm. The protein localises to the cytoskeleton. It is found in the cell projection. It localises to the nucleus. In terms of biological role, component of the Arp2/3 complex, a multiprotein complex that mediates actin polymerization upon stimulation by nucleation-promoting factor (NPF). The Arp2/3 complex mediates the formation of branched actin networks in the cytoplasm, providing the force for cell motility. In addition to its role in the cytoplasmic cytoskeleton, the Arp2/3 complex also promotes actin polymerization in the nucleus, thereby regulating gene transcription and repair of damaged DNA. The Arp2/3 complex promotes homologous recombination (HR) repair in response to DNA damage by promoting nuclear actin polymerization, leading to drive motility of double-strand breaks (DSBs). The chain is Actin-related protein 2/3 complex subunit 5-B (arpc5-b) from Xenopus laevis (African clawed frog).